The primary structure comprises 221 residues: UPF0319 protein CGSHiGG_02140 (221 aa).

Positions 1 to 21 are cleaved as a signal peptide; that stretch reads MKLRAVVLGLATLCTSTATFA.

It belongs to the UPF0319 family.

In Haemophilus influenzae (strain PittGG), this protein is UPF0319 protein CGSHiGG_02140.